A 325-amino-acid polypeptide reads, in one-letter code: Diacylglycerol acyltransferase/mycolyltransferase Ag85B (325 aa).

The signal sequence occupies residues 1–40; sequence MTDVSRKIRAWGRRLMIGTAAAVVLPGLVGLAGGAATAGA. Substrate is bound at residue 82–83; sequence LR. The fibronectin-binding stretch occupies residues 98–108; the sequence is FEWYYQSGLSI. Residues Cys127 and Cys132 are joined by a disulfide bond. Substrate-binding residues include Ser166 and Asp194. Ser166 functions as the Nucleophile in the catalytic mechanism. Glu270 is a catalytic residue. Substrate-binding positions include 272-275, Lys279, and 302-304; these read FVRS and HSW. His302 is a catalytic residue.

This sequence belongs to the mycobacterial A85 antigen family.

It is found in the secreted. It catalyses the reaction 2 alpha,alpha'-trehalose 6-mycolate = alpha,alpha'-trehalose 6,6'-bismycolate + alpha,alpha-trehalose. The catalysed reaction is an acyl-CoA + a 1,2-diacyl-sn-glycerol = a triacyl-sn-glycerol + CoA. Its function is as follows. The antigen 85 proteins (FbpA, FbpB, FbpC) are responsible for the high affinity of mycobacteria for fibronectin, a large adhesive glycoprotein, which facilitates the attachment of M.tuberculosis to murine alveolar macrophages (AMs). They also help to maintain the integrity of the cell wall by catalyzing the transfer of mycolic acids to cell wall arabinogalactan and through the synthesis of alpha,alpha-trehalose dimycolate (TDM, cord factor). They catalyze the transfer of a mycoloyl residue from one molecule of alpha,alpha-trehalose monomycolate (TMM) to another TMM, leading to the formation of TDM. The polypeptide is Diacylglycerol acyltransferase/mycolyltransferase Ag85B (fbpB) (Mycobacterium tuberculosis (strain ATCC 25177 / H37Ra)).